Reading from the N-terminus, the 245-residue chain is Probable phosphatase YE2421 (245 aa).

Residues His-7, His-9, His-15, His-40, Glu-73, His-101, His-131, Asp-192, and His-194 each coordinate Zn(2+).

Belongs to the PHP family. In terms of assembly, homotrimer. The cofactor is Zn(2+).

The chain is Probable phosphatase YE2421 from Yersinia enterocolitica serotype O:8 / biotype 1B (strain NCTC 13174 / 8081).